We begin with the raw amino-acid sequence, 157 residues long: Secreted effector protein See1 (157 aa).

The first 21 residues, Met1 to Ala21, serve as a signal peptide directing secretion. The disordered stretch occupies residues Ser124–Thr157. Positions Gly128–Glu138 are enriched in basic and acidic residues.

Interacts with a maize homolog of SGT1, a factor acting in cell cycle progression in yeast Saccharomyces cerevisiae and an important component of plant and human innate immunity.

It is found in the secreted. The protein resides in the host cytoplasm. The protein localises to the host nucleus. In terms of biological role, effector protein involved in the induction of tumors in infected plant tissues by the fungus. Required for the reactivation of plant DNA synthesis, which is crucial for tumor progression in leaf cells. Interferes with the MAPK-triggered phosphorylation of maize SGT1 at a monocot-specific phosphorylation site, resulting in both modulation of immune responses and reactivation of DNA synthesis during leaf tumor formation. The chain is Secreted effector protein See1 from Mycosarcoma maydis (Corn smut fungus).